The primary structure comprises 427 residues: Isocitrate dehydrogenase [NADP] (427 aa).

Threonine 114 provides a ligand contact to NADP(+). Serine 123, asparagine 125, arginine 129, arginine 139, and arginine 163 together coordinate D-threo-isocitrate. A Mg(2+)-binding site is contributed by aspartate 317. NADP(+)-binding positions include 349–355 (HGTAPKY), asparagine 362, tyrosine 401, and arginine 405.

This sequence belongs to the isocitrate and isopropylmalate dehydrogenases family. In terms of assembly, homodimer. Mg(2+) is required as a cofactor. Requires Mn(2+) as cofactor.

It catalyses the reaction D-threo-isocitrate + NADP(+) = 2-oxoglutarate + CO2 + NADPH. Its function is as follows. Catalyzes the oxidative decarboxylation of isocitrate to 2-oxoglutarate and carbon dioxide with the concomitant reduction of NADP(+). The polypeptide is Isocitrate dehydrogenase [NADP] (icd) (Coxiella burnetii (strain RSA 493 / Nine Mile phase I)).